A 354-amino-acid polypeptide reads, in one-letter code: Quinone-reactive Ni/Fe-hydrogenase small chain (354 aa).

Residues 1-36 (MLEEKGIERRDFMKWAGAMTAMLSLPATFTPLTAKA) constitute a signal peptide (tat-type signal). Residues C53, C56, C153, C186, H224, C227, C252, and C258 each coordinate [4Fe-4S] cluster. Residues C267, C286, and C289 each coordinate [3Fe-4S] cluster.

This sequence belongs to the [NiFe]/[NiFeSe] hydrogenase small subunit family. Heterodimer of a large and a small subunit. Requires [4Fe-4S] cluster as cofactor. The cofactor is [3Fe-4S] cluster. Post-translationally, predicted to be exported by the Tat system. The position of the signal peptide cleavage has been experimentally proven.

The protein resides in the cell membrane. It carries out the reaction H2 + a menaquinone = a menaquinol. The protein is Quinone-reactive Ni/Fe-hydrogenase small chain (hydA) of Wolinella succinogenes (strain ATCC 29543 / DSM 1740 / CCUG 13145 / JCM 31913 / LMG 7466 / NCTC 11488 / FDC 602W) (Vibrio succinogenes).